Here is a 248-residue protein sequence, read N- to C-terminus: Gas vesicle protein J (248 aa).

Residues 121–140 form a 1; truncated repeat; that stretch reads DVKDDLYQTSAKIPSPVDTP. Positions 121–245 are 6 X 21 AA approximate tandem repeats; the sequence is DVKDDLYQTS…EEIPSSVDPA (125 aa). A run of 5 repeats spans residues 141 to 161, 162 to 182, 183 to 203, 204 to 224, and 225 to 245.

The protein belongs to the gas vesicle GvpA family. As to quaternary structure, interacts with GvpA.

Its subcellular location is the gas vesicle. A minor component of the gas vesicle, might be involved in nucleating gas vesicle formation. Gas vesicles (GV) are hollow, gas filled proteinaceous nanostructures. During planktonic growth they allow positioning of the organism at a favorable depth for light or nutrient acquisition. The protein is Gas vesicle protein J of Dolichospermum flosaquae (Anabaena flos-aquae).